Reading from the N-terminus, the 299-residue chain is 4-diphosphocytidyl-2-C-methyl-D-erythritol kinase (299 aa).

Lysine 16 is a catalytic residue. 97 to 107 (PVASGIGGGSA) is a binding site for ATP. Aspartate 140 is an active-site residue.

This sequence belongs to the GHMP kinase family. IspE subfamily.

It catalyses the reaction 4-CDP-2-C-methyl-D-erythritol + ATP = 4-CDP-2-C-methyl-D-erythritol 2-phosphate + ADP + H(+). It participates in isoprenoid biosynthesis; isopentenyl diphosphate biosynthesis via DXP pathway; isopentenyl diphosphate from 1-deoxy-D-xylulose 5-phosphate: step 3/6. Catalyzes the phosphorylation of the position 2 hydroxy group of 4-diphosphocytidyl-2C-methyl-D-erythritol. The sequence is that of 4-diphosphocytidyl-2-C-methyl-D-erythritol kinase from Roseobacter denitrificans (strain ATCC 33942 / OCh 114) (Erythrobacter sp. (strain OCh 114)).